A 688-amino-acid polypeptide reads, in one-letter code: Elongation factor G (688 aa).

Residues 8–282 (DKFRNFGIMA…GVVDYLPSPL (275 aa)) form the tr-type G domain. GTP contacts are provided by residues 17–24 (AHIDAGKT), 81–85 (DTPGH), and 135–138 (NKMD).

Belongs to the TRAFAC class translation factor GTPase superfamily. Classic translation factor GTPase family. EF-G/EF-2 subfamily.

It localises to the cytoplasm. Its function is as follows. Catalyzes the GTP-dependent ribosomal translocation step during translation elongation. During this step, the ribosome changes from the pre-translocational (PRE) to the post-translocational (POST) state as the newly formed A-site-bound peptidyl-tRNA and P-site-bound deacylated tRNA move to the P and E sites, respectively. Catalyzes the coordinated movement of the two tRNA molecules, the mRNA and conformational changes in the ribosome. In Clostridium botulinum (strain Alaska E43 / Type E3), this protein is Elongation factor G.